An 806-amino-acid polypeptide reads, in one-letter code: Acetyl-CoA decarbonylase/synthase complex subunit alpha 1 (806 aa).

[4Fe-4S] cluster is bound by residues cysteine 73, cysteine 76, cysteine 77, cysteine 79, cysteine 84, and cysteine 94. Histidine 117 is a binding site for CO. Histidine 250, cysteine 278, and cysteine 323 together coordinate [Ni-4Fe-4S] cluster. 4Fe-4S ferredoxin-type domains lie at 406 to 436 and 445 to 475; these read SDEQ…IPEA and FSYL…LSVI. [4Fe-4S] cluster contacts are provided by cysteine 417, cysteine 420, cysteine 423, cysteine 427, cysteine 455, cysteine 458, cysteine 461, and cysteine 465. Residues cysteine 523, cysteine 552, and cysteine 587 each contribute to the [Ni-4Fe-4S] cluster site.

It belongs to the Ni-containing carbon monoxide dehydrogenase family. In terms of assembly, heterotetramer of two alpha and two epsilon subunits. The ACDS complex is made up of alpha, epsilon, beta, gamma and delta subunits with a probable stoichiometry of (alpha(2)epsilon(2))(4)-beta(8)-(gamma(1)delta(1))(8). It depends on [4Fe-4S] cluster as a cofactor. [Ni-4Fe-4S] cluster is required as a cofactor.

It catalyses the reaction CO + 2 oxidized [2Fe-2S]-[ferredoxin] + H2O = 2 reduced [2Fe-2S]-[ferredoxin] + CO2 + 2 H(+). It participates in one-carbon metabolism; methanogenesis from acetate. Part of the ACDS complex that catalyzes the reversible cleavage of acetyl-CoA, allowing growth on acetate as sole source of carbon and energy. The alpha-epsilon subcomponent functions as a carbon monoxide dehydrogenase. This is Acetyl-CoA decarbonylase/synthase complex subunit alpha 1 from Methanosarcina mazei (strain ATCC BAA-159 / DSM 3647 / Goe1 / Go1 / JCM 11833 / OCM 88) (Methanosarcina frisia).